Consider the following 386-residue polypeptide: S-adenosylmethionine synthase (386 aa).

His16 lines the ATP pocket. Asp18 contributes to the Mg(2+) binding site. Glu44 is a binding site for K(+). L-methionine contacts are provided by Glu57 and Gln100. Positions 100-110 (QSPDINQGVDR) are flexible loop. Residues 164-166 (DGK), 230-231 (KF), Asp239, 245-246 (RK), Ala262, and Lys266 contribute to the ATP site. Residue Asp239 coordinates L-methionine. Lys270 contributes to the L-methionine binding site.

It belongs to the AdoMet synthase family. In terms of assembly, homotetramer; dimer of dimers. Mg(2+) is required as a cofactor. K(+) serves as cofactor.

The protein localises to the cytoplasm. It catalyses the reaction L-methionine + ATP + H2O = S-adenosyl-L-methionine + phosphate + diphosphate. Its pathway is amino-acid biosynthesis; S-adenosyl-L-methionine biosynthesis; S-adenosyl-L-methionine from L-methionine: step 1/1. In terms of biological role, catalyzes the formation of S-adenosylmethionine (AdoMet) from methionine and ATP. The overall synthetic reaction is composed of two sequential steps, AdoMet formation and the subsequent tripolyphosphate hydrolysis which occurs prior to release of AdoMet from the enzyme. In Helicobacter hepaticus (strain ATCC 51449 / 3B1), this protein is S-adenosylmethionine synthase.